The chain runs to 2090 residues: Dysferlin (2090 aa).

The 101-residue stretch at 1 to 101 (MLRVFILFAE…LATPSLSASF (101 aa)) folds into the C2 1 domain. Residues 1–2056 (MLRVFILFAE…FILWRRFRCA (2056 aa)) are Cytoplasmic-facing. D18, I19, D21, and N40 together coordinate Ca(2+). Residues 130–217 (VPLFPPPASL…SAPPRKLLSD (88 aa)) are disordered. Acidic residues predominate over residues 155-172 (GGEEDTEDQGLTGDEAEP). Residue G164 is modified to Phosphoserine. T166 is subject to Phosphothreonine. G167 carries the post-translational modification Phosphoserine. Over residues 188–199 (PRKPPSHPPPHY) the composition is skewed to pro residues. 6 consecutive C2 domains span residues 206–323 (RSSA…RKWL), 362–498 (DKED…EEEP), 1146–1272 (GVNR…PLTR), 1320–1448 (PPPQ…AESP), 1571–1689 (PMPP…ARCG), and 1805–1953 (GRPG…EKCS). Position 209 is a phosphoserine (A209). The residue at position 219 (P219) is a Phosphothreonine. Residues D411, D419, D467, D469, D475, D1178, D1184, D1240, and D1242 each contribute to the Ca(2+) site. D1604, D1610, D1659, D1661, D1924, S1927, and D1930 together coordinate Ca(2+). A disordered region spans residues 2005 to 2027 (SEHEERPAGQGRDEPNMNPKLED). The chain crosses the membrane as a helical span at residues 2057–2077 (IILFIILFILLLFLGVFVYAF). At 2078 to 2090 (PNYAAMKLVKPFR) the chain is on the extracellular side.

Belongs to the ferlin family. In terms of assembly, interacts with CAV3. Interacts with AHNAK; the interaction is direct and Ca(2+)-independent. Interacts with AHNAK2; the interaction is direct and Ca(2+)-independent. Interacts with ANXA1; the interaction is Ca(2+)- and injury state-dependent. Interacts with ANXA2; the interaction is Ca(2+)- and injury state-dependent. Interacts with CACNA1S and PARVB. Interacts with TRIM72/MG53; interaction is required for transport to sites of cell injury during repair patch formation. Interacts with RIPOR2; this interaction occurs during early myogenic differentiation. It depends on Ca(2+) as a cofactor. As to expression, expressed in skeletal and cardiac muscles (at protein level). Expressed in skeletal muscle and heart. Also found in brain, liver and kidney.

It localises to the cell membrane. The protein resides in the sarcolemma. Its subcellular location is the cytoplasmic vesicle membrane. Key calcium ion sensor involved in the Ca(2+)-triggered synaptic vesicle-plasma membrane fusion. Plays a role in the sarcolemma repair mechanism of both skeletal muscle and cardiomyocytes that permits rapid resealing of membranes disrupted by mechanical stress. In Mus musculus (Mouse), this protein is Dysferlin (Dysf).